A 298-amino-acid polypeptide reads, in one-letter code: DNA-3-methyladenine glycosylase (298 aa).

The N-terminal 17 residues, 1-17, are a transit peptide targeting the mitochondrion; that stretch reads MVTPALQMKKPKQFCRR. Residues 1–65 are disordered; that stretch reads MVTPALQMKK…CPRERCLGPP (65 aa). Over residues 9–25 the composition is skewed to basic residues; sequence KKPKQFCRRMGQKKQRP. Phosphoserine is present on residues serine 78 and serine 252.

It belongs to the DNA glycosylase MPG family. In terms of assembly, binds MBD1. Binds SSBP1.

The protein localises to the cytoplasm. It localises to the mitochondrion matrix. Its subcellular location is the mitochondrion nucleoid. The protein resides in the nucleus. The enzyme catalyses Hydrolysis of alkylated DNA, releasing 3-methyladenine, 3-methylguanine, 7-methylguanine and 7-methyladenine.. Binding to SSBP1 in mitochondria inhibits glycosylase activity in the context of a single-stranded DNA (ssDNA), but not a double-stranded DNA (dsDNA) substrates. Functionally, hydrolysis of the deoxyribose N-glycosidic bond to excise 3-methyladenine, and 7-methylguanine from the damaged DNA polymer formed by alkylation lesions. This Homo sapiens (Human) protein is DNA-3-methyladenine glycosylase (MPG).